The chain runs to 160 residues: Endoribonuclease YbeY (160 aa).

Zn(2+)-binding residues include H125, H129, and H135.

The protein belongs to the endoribonuclease YbeY family. It depends on Zn(2+) as a cofactor.

The protein resides in the cytoplasm. Its function is as follows. Single strand-specific metallo-endoribonuclease involved in late-stage 70S ribosome quality control and in maturation of the 3' terminus of the 16S rRNA. In Leuconostoc citreum (strain KM20), this protein is Endoribonuclease YbeY.